Consider the following 273-residue polypeptide: Putative phosphoenolpyruvate synthase regulatory protein (273 aa).

An ADP-binding site is contributed by 153–160 (AVSRAGKT).

It belongs to the pyruvate, phosphate/water dikinase regulatory protein family. PSRP subfamily.

It carries out the reaction [pyruvate, water dikinase] + ADP = [pyruvate, water dikinase]-phosphate + AMP + H(+). The catalysed reaction is [pyruvate, water dikinase]-phosphate + phosphate + H(+) = [pyruvate, water dikinase] + diphosphate. Bifunctional serine/threonine kinase and phosphorylase involved in the regulation of the phosphoenolpyruvate synthase (PEPS) by catalyzing its phosphorylation/dephosphorylation. This Stenotrophomonas maltophilia (strain R551-3) protein is Putative phosphoenolpyruvate synthase regulatory protein.